We begin with the raw amino-acid sequence, 522 residues long: Echinocystic acid 23-monooxygenase (522 aa).

The chain crosses the membrane as a helical; Signal-anchor for type II membrane protein span at residues 4-24 (LPYIATSIACIVILRWALNMM). N-linked (GlcNAc...) asparagine glycosylation occurs at Asn190. Cys470 serves as a coordination point for heme.

This sequence belongs to the cytochrome P450 family. The cofactor is heme. As to expression, mainly expressed in flowers and flower buds, to a lesser extent in young leaves and, at low levels, in old leaves, stems and roots.

It is found in the membrane. It participates in secondary metabolite biosynthesis; terpenoid biosynthesis. Functionally, component of the oleanane-type triterpene saponins (e.g. saponarioside A and saponarioside B) biosynthetic pathway, leading to the production of natural products with detergent properties used as traditional sources of soap. An oxidoreductase that facilitates the oxidation of the methyl group to a carboxyl group at the C-23 position of echinocystic acid, resulting in the formation of quillaic acid (QA). This Saponaria officinalis (Common soapwort) protein is Echinocystic acid 23-monooxygenase.